The sequence spans 297 residues: Leucine-rich repeat-containing protein 25 (297 aa).

The signal sequence occupies residues 1-25 (MGSIRTRLLWLCLLMLLALLHKSGS). Residues 26–169 (QDLTCMVHPS…SCPPSWGPGT (144 aa)) lie on the Extracellular side of the membrane. N-linked (GlcNAc...) asparagine glycosylation is found at Asn44 and Asn49. 2 LRR repeats span residues 66 to 89 (HAQV…DKLE) and 90 to 113 (KLQT…LRCD). N-linked (GlcNAc...) asparagine glycans are attached at residues Asn133 and Asn152. The chain crosses the membrane as a helical span at residues 170–190 (IGALVAGTISLAVAVSGSVLA). The Cytoplasmic portion of the chain corresponds to 191 to 297 (WRLLRRRRRA…VYCNLESLGR (107 aa)). The segment at 202–244 (EHSLSKAQMSPHDIPKPVTDFLPRYSSRRPGPKAPDSPPSRFT) is disordered. Ser211, Ser238, and Ser267 each carry phosphoserine. Phosphotyrosine is present on Tyr289.

Interacts with RIGI. Interacts with SQSTM1. Interacts with p65/RELA; this interaction promotes the degradation of RELA through autophagy.

It is found in the membrane. Its subcellular location is the cytoplasm. In terms of biological role, plays a role in the inhibition of RLR-mediated type I interferon signaling pathway by targeting RIGI for autophagic degradation. Interacts specifically with ISG15-associated RIGI to promote interaction between RIGI and the autophagic cargo receptor p62/SQSTM1 to mediate RIGI degradation via selective autophagy. Plays also a role in the inhibition of NF-kappa-B signaling pathway and inflammatory response by promoting the degradation of p65/RELA. In Mus musculus (Mouse), this protein is Leucine-rich repeat-containing protein 25 (Lrrc25).